We begin with the raw amino-acid sequence, 288 residues long: Nucleotide-binding protein ASA_0318 (288 aa).

ATP is bound at residue 8–15 (GRSGSGKT). A GTP-binding site is contributed by 56-59 (DVRN).

This sequence belongs to the RapZ-like family.

Functionally, displays ATPase and GTPase activities. The sequence is that of Nucleotide-binding protein ASA_0318 from Aeromonas salmonicida (strain A449).